A 106-amino-acid polypeptide reads, in one-letter code: Large ribosomal subunit protein eL42 (106 aa).

Residues 34–53 (YAQGRRRYDRKRSGYGGQTK) are disordered. An N6-methyllysine modification is found at Lys-53.

Belongs to the eukaryotic ribosomal protein eL42 family.

The protein resides in the cytoplasm. In Pongo abelii (Sumatran orangutan), this protein is Large ribosomal subunit protein eL42 (RPL36AL).